The sequence spans 635 residues: 1-deoxy-D-xylulose-5-phosphate synthase (635 aa).

Thiamine diphosphate-binding positions include histidine 74 and 115–117; that span reads AHS. A Mg(2+)-binding site is contributed by aspartate 146. Residues 147–148, asparagine 176, tyrosine 283, and glutamate 365 contribute to the thiamine diphosphate site; that span reads GA. Asparagine 176 is a binding site for Mg(2+).

The protein belongs to the transketolase family. DXPS subfamily. As to quaternary structure, homodimer. Mg(2+) is required as a cofactor. Requires thiamine diphosphate as cofactor.

The enzyme catalyses D-glyceraldehyde 3-phosphate + pyruvate + H(+) = 1-deoxy-D-xylulose 5-phosphate + CO2. It functions in the pathway metabolic intermediate biosynthesis; 1-deoxy-D-xylulose 5-phosphate biosynthesis; 1-deoxy-D-xylulose 5-phosphate from D-glyceraldehyde 3-phosphate and pyruvate: step 1/1. Functionally, catalyzes the acyloin condensation reaction between C atoms 2 and 3 of pyruvate and glyceraldehyde 3-phosphate to yield 1-deoxy-D-xylulose-5-phosphate (DXP). The polypeptide is 1-deoxy-D-xylulose-5-phosphate synthase (Paraburkholderia xenovorans (strain LB400)).